The primary structure comprises 46 residues: Photosystem II reaction center protein K (46 aa).

The propeptide occupies 1 to 9; it reads MLTLLNTFA. Residues 25-45 traverse the membrane as a helical segment; that stretch reads LPLIPLFFFLLVFVWQAAVGF.

It belongs to the PsbK family. PSII is composed of 1 copy each of membrane proteins PsbA, PsbB, PsbC, PsbD, PsbE, PsbF, PsbH, PsbI, PsbJ, PsbK, PsbL, PsbM, PsbT, PsbX, PsbY, Psb30/Ycf12, peripheral proteins PsbO, CyanoQ (PsbQ), PsbU, PsbV and a large number of cofactors. It forms dimeric complexes.

The protein resides in the cellular thylakoid membrane. In terms of biological role, one of the components of the core complex of photosystem II (PSII). PSII is a light-driven water:plastoquinone oxidoreductase that uses light energy to abstract electrons from H(2)O, generating O(2) and a proton gradient subsequently used for ATP formation. It consists of a core antenna complex that captures photons, and an electron transfer chain that converts photonic excitation into a charge separation. This Prochlorococcus marinus (strain MIT 9515) protein is Photosystem II reaction center protein K.